The primary structure comprises 153 residues: MRVVIQRVNFSQVKVNEEIVGKIGKGLNLLVAISTTDTEAEIDWIVRKCLDLRLFPDPDSNNNFWEKSVKDIDGELLIVSQFTLYGDCRKGRRPSFDNSASPEVAKQLYQLFVEKLKLSGLKVATGIFGAMMQVEIDNDGPVTFLLEKEANNK.

A Gly-cisPro motif, important for rejection of L-amino acids motif is present at residues 140–141; that stretch reads GP.

It belongs to the DTD family. As to quaternary structure, homodimer.

It is found in the cytoplasm. The enzyme catalyses glycyl-tRNA(Ala) + H2O = tRNA(Ala) + glycine + H(+). It catalyses the reaction a D-aminoacyl-tRNA + H2O = a tRNA + a D-alpha-amino acid + H(+). Functionally, an aminoacyl-tRNA editing enzyme that deacylates mischarged D-aminoacyl-tRNAs. Also deacylates mischarged glycyl-tRNA(Ala), protecting cells against glycine mischarging by AlaRS. Acts via tRNA-based rather than protein-based catalysis; rejects L-amino acids rather than detecting D-amino acids in the active site. By recycling D-aminoacyl-tRNA to D-amino acids and free tRNA molecules, this enzyme counteracts the toxicity associated with the formation of D-aminoacyl-tRNA entities in vivo and helps enforce protein L-homochirality. This is D-aminoacyl-tRNA deacylase from Trichodesmium erythraeum (strain IMS101).